Here is a 230-residue protein sequence, read N- to C-terminus: Protein LURP-one-related 11 (230 aa).

The protein belongs to the LOR family.

In terms of biological role, might be related to the phospholipid scramblase and tubby-like superfamily of membrane tethered transcription factors. In Arabidopsis thaliana (Mouse-ear cress), this protein is Protein LURP-one-related 11.